Reading from the N-terminus, the 147-residue chain is 3-dehydroquinate dehydratase 2 (147 aa).

The active-site Proton acceptor is Tyr23. The substrate site is built by Asn74, His80, and Asp87. His100 serves as the catalytic Proton donor. Substrate-binding positions include 101–102 (IS) and Arg111.

It belongs to the type-II 3-dehydroquinase family. In terms of assembly, homododecamer.

The enzyme catalyses 3-dehydroquinate = 3-dehydroshikimate + H2O. It functions in the pathway metabolic intermediate biosynthesis; chorismate biosynthesis; chorismate from D-erythrose 4-phosphate and phosphoenolpyruvate: step 3/7. Functionally, catalyzes a trans-dehydration via an enolate intermediate. The polypeptide is 3-dehydroquinate dehydratase 2 (aroQ2) (Agrobacterium fabrum (strain C58 / ATCC 33970) (Agrobacterium tumefaciens (strain C58))).